Reading from the N-terminus, the 146-residue chain is MAKISVAAAALLVLMALGHATAFRATVTTTVVEEENQEECREQMQRQQMLSHCRMYMRQQMEESPYQTMPRRGMEPHMSECCEQLEGMDESCRCEGLRMMMMRMQQEEMQPRGEQMRRMMRLAENIPSRCNLSPMRCPMGGSIAGF.

The first 22 residues, 1-22, serve as a signal peptide directing secretion; the sequence is MAKISVAAAALLVLMALGHATA. The propeptide occupies 23-36; the sequence is FRATVTTTVVEEEN. Gln-37 carries the pyrrolidone carboxylic acid modification. Cystine bridges form between Cys-40/Cys-92, Cys-53/Cys-81, Cys-82/Cys-130, and Cys-94/Cys-137. Residues 65–69 constitute a propeptide that is removed on maturation; sequence PYQTM. A propeptide spanning residues 143–146 is cleaved from the precursor; that stretch reads IAGF.

This sequence belongs to the 2S seed storage albumins family. In terms of assembly, the mature protein consists of a small and a large chain linked by disulfide bonds.

Functionally, this is a 2S seed storage protein. The sequence is that of 2S sulfur-rich seed storage protein 1 (BE2S1) from Bertholletia excelsa (Brazil nut).